The sequence spans 430 residues: Tol-Pal system protein TolB (430 aa).

An N-terminal signal peptide occupies residues 1–21 (MKQALRVAFGFLMLWAAVLHA).

It belongs to the TolB family. The Tol-Pal system is composed of five core proteins: the inner membrane proteins TolA, TolQ and TolR, the periplasmic protein TolB and the outer membrane protein Pal. They form a network linking the inner and outer membranes and the peptidoglycan layer.

The protein localises to the periplasm. Functionally, part of the Tol-Pal system, which plays a role in outer membrane invagination during cell division and is important for maintaining outer membrane integrity. TolB occupies a key intermediary position in the Tol-Pal system because it communicates directly with both membrane-embedded components, Pal in the outer membrane and TolA in the inner membrane. The protein is Tol-Pal system protein TolB of Salmonella choleraesuis (strain SC-B67).